The following is a 567-amino-acid chain: Glucose-6-phosphate isomerase, cytosolic A (567 aa).

D-glucose 6-phosphate contacts are provided by residues 156-157 (GS), 212-217 (SKTFTT), Gln356, Glu360, His391, and Lys516. Residue Glu360 is the Proton donor of the active site. Residues His391 and Lys516 contribute to the active site.

It belongs to the GPI family. In terms of assembly, homodimer.

It localises to the cytoplasm. It catalyses the reaction alpha-D-glucose 6-phosphate = beta-D-fructose 6-phosphate. It functions in the pathway carbohydrate degradation; glycolysis; D-glyceraldehyde 3-phosphate and glycerone phosphate from D-glucose: step 2/4. Its function is as follows. Catalyzes the conversion of glucose-6-phosphate to fructose-6-phosphate, the second step in glycolysis, and the reverse reaction during gluconeogenesis. The chain is Glucose-6-phosphate isomerase, cytosolic A from Oryza sativa subsp. japonica (Rice).